The following is a 295-amino-acid chain: Ribosomal RNA small subunit methyltransferase A (295 aa).

S-adenosyl-L-methionine is bound by residues asparagine 29, leucine 31, glycine 56, glutamate 77, aspartate 102, and asparagine 128.

Belongs to the class I-like SAM-binding methyltransferase superfamily. rRNA adenine N(6)-methyltransferase family. RsmA subfamily.

The protein localises to the cytoplasm. The enzyme catalyses adenosine(1518)/adenosine(1519) in 16S rRNA + 4 S-adenosyl-L-methionine = N(6)-dimethyladenosine(1518)/N(6)-dimethyladenosine(1519) in 16S rRNA + 4 S-adenosyl-L-homocysteine + 4 H(+). Its function is as follows. Specifically dimethylates two adjacent adenosines (A1518 and A1519) in the loop of a conserved hairpin near the 3'-end of 16S rRNA in the 30S particle. May play a critical role in biogenesis of 30S subunits. The polypeptide is Ribosomal RNA small subunit methyltransferase A (Listeria monocytogenes serovar 1/2a (strain ATCC BAA-679 / EGD-e)).